A 312-amino-acid polypeptide reads, in one-letter code: Ribonuclease HIII (312 aa).

Residues Phe95 to Pro311 enclose the RNase H type-2 domain. A divalent metal cation-binding residues include Asp101, Glu102, and Asp206.

This sequence belongs to the RNase HII family. RnhC subfamily. It depends on Mn(2+) as a cofactor. Mg(2+) is required as a cofactor.

It localises to the cytoplasm. The enzyme catalyses Endonucleolytic cleavage to 5'-phosphomonoester.. Endonuclease that specifically degrades the RNA of RNA-DNA hybrids. This Staphylococcus aureus (strain USA300) protein is Ribonuclease HIII.